Consider the following 119-residue polypeptide: T cell receptor alpha variable 29/delta variable 5 (119 aa).

The signal sequence occupies residues 1 to 21; sequence MAMLLGASVLILWLQPDWVNS. In terms of domain architecture, Ig-like spans 22-119; sequence QQKNDDQQVK…DSAVYFCAAS (98 aa). The cysteines at positions 49 and 116 are disulfide-linked. Residue Asn93 is glycosylated (N-linked (GlcNAc...) asparagine).

In terms of assembly, alpha-beta TR is a heterodimer composed of an alpha and beta chain; disulfide-linked. The alpha-beta TR is associated with the transmembrane signaling CD3 coreceptor proteins to form the TR-CD3 (TcR or TCR). The assembly of alpha-beta TR heterodimers with CD3 occurs in the endoplasmic reticulum where a single alpha-beta TR heterodimer associates with one CD3D-CD3E heterodimer, one CD3G-CD3E heterodimer and one CD247 homodimer forming a stable octameric structure. CD3D-CD3E and CD3G-CD3E heterodimers preferentially associate with TR alpha and TR beta chains, respectively. The association of the CD247 homodimer is the last step of TcR assembly in the endoplasmic reticulum and is required for transport to the cell surface.

The protein resides in the cell membrane. Functionally, v region of the variable domain of T cell receptor (TR) alpha chain that participates in the antigen recognition. Alpha-beta T cell receptors are antigen specific receptors which are essential to the immune response and are present on the cell surface of T lymphocytes. Recognize peptide-major histocompatibility (MH) (pMH) complexes that are displayed by antigen presenting cells (APC), a prerequisite for efficient T cell adaptive immunity against pathogens. Binding of alpha-beta TR to pMH complex initiates TR-CD3 clustering on the cell surface and intracellular activation of LCK that phosphorylates the ITAM motifs of CD3G, CD3D, CD3E and CD247 enabling the recruitment of ZAP70. In turn ZAP70 phosphorylates LAT, which recruits numerous signaling molecules to form the LAT signalosome. The LAT signalosome propagates signal branching to three major signaling pathways, the calcium, the mitogen-activated protein kinase (MAPK) kinase and the nuclear factor NF-kappa-B (NF-kB) pathways, leading to the mobilization of transcription factors that are critical for gene expression and essential for T cell growth and differentiation. The T cell repertoire is generated in the thymus, by V-(D)-J rearrangement. This repertoire is then shaped by intrathymic selection events to generate a peripheral T cell pool of self-MH restricted, non-autoaggressive T cells. Post-thymic interaction of alpha-beta TR with the pMH complexes shapes TR structural and functional avidity. The sequence is that of T cell receptor alpha variable 29/delta variable 5 from Homo sapiens (Human).